Here is a 161-residue protein sequence, read N- to C-terminus: Zinc finger A20 and AN1 domain-containing stress-associated protein 4 (161 aa).

The A20-type zinc-finger motif lies at 10–44 (PEGHRLCVNNCGFFGSSATMNLCSNCYGDLCLKQQ). Zn(2+)-binding residues include Cys-16, Cys-20, Cys-32, and Cys-35. Residues 76–85 (TTKKTEEKKP) show a composition bias toward basic and acidic residues. Positions 76–99 (TTKKTEEKKPIQIPTEQPSPPQRP) are disordered. The segment at 96-142 (PQRPNRCTVCRKRVGLTGFMCRCGTTFCGSHRYPEVHGCTFDFKSAG) adopts an AN1-type zinc-finger fold. The Zn(2+) site is built by Cys-102, Cys-105, Cys-116, Cys-118, Cys-123, His-126, His-132, and Cys-134.

Its function is as follows. May be involved in environmental stress response. This Arabidopsis thaliana (Mouse-ear cress) protein is Zinc finger A20 and AN1 domain-containing stress-associated protein 4 (SAP4).